The sequence spans 260 residues: Ribonuclease HII (260 aa).

Positions 71–259 constitute an RNase H type-2 domain; that stretch reads RRIAGIDEAG…VREVLKASEQ (189 aa). The a divalent metal cation site is built by Asp77, Glu78, and Asp169.

Belongs to the RNase HII family. Requires Mn(2+) as cofactor. Mg(2+) serves as cofactor.

The protein resides in the cytoplasm. It carries out the reaction Endonucleolytic cleavage to 5'-phosphomonoester.. Functionally, endonuclease that specifically degrades the RNA of RNA-DNA hybrids. This Geobacillus kaustophilus (strain HTA426) protein is Ribonuclease HII.